The following is a 348-amino-acid chain: Noscapine synthase SDR1 (348 aa).

This sequence belongs to the NAD(P)-dependent epimerase/dehydratase family.

The enzyme catalyses narcotine hemiacetal + NAD(+) = noscapine + NADH + H(+). It functions in the pathway alkaloid biosynthesis. Functionally, oxidoreductase that catalyzes the last step in the biosynthesis of the benzylisoquinoline alkaloid noscapine. Converts narcotine hemiacetal to noscapine. The protein is Noscapine synthase SDR1 of Papaver somniferum (Opium poppy).